Here is a 362-residue protein sequence, read N- to C-terminus: MGSSFGDLFRISTFGESHGGGVGVIVEGCPPRLELDLQKIQAELDRRKPGQSKISTPRKEEDQVEILSGLLNNTTLGTPIAMVVRNKDHKPGDYKEMNVAFRPSHADATYQAKYGIQARSGGGRASARETIARVAAGAIAKQLLTKAHNTEVLAWVKRIHTLEAEINAQDVSIDDVEANIVRCPNQVMAAQMVERIEAISREGDSCGGVIECVVRNAPMGLGMPVFDKLEADLAKAVMSLPASKGFEIGSGFGGTLLKGSEHNDAFLPSNDGRLRTATNNSGGIQGGITNGESIVIRVAFKPTATIRKDQQTIDADGNTTTLSAKGRHDPCVLPRAVPIVEAMVSLVLADHLLRQQGQCSLW.

Position 47 (Arg47) interacts with NADP(+). FMN contacts are provided by residues Arg124–Ser126, Gly286, Lys301–Thr305, and Arg327.

It belongs to the chorismate synthase family. In terms of assembly, homotetramer. Requires FMNH2 as cofactor.

The catalysed reaction is 5-O-(1-carboxyvinyl)-3-phosphoshikimate = chorismate + phosphate. Its pathway is metabolic intermediate biosynthesis; chorismate biosynthesis; chorismate from D-erythrose 4-phosphate and phosphoenolpyruvate: step 7/7. Functionally, catalyzes the anti-1,4-elimination of the C-3 phosphate and the C-6 proR hydrogen from 5-enolpyruvylshikimate-3-phosphate (EPSP) to yield chorismate, which is the branch point compound that serves as the starting substrate for the three terminal pathways of aromatic amino acid biosynthesis. This reaction introduces a second double bond into the aromatic ring system. The polypeptide is Chorismate synthase (Prochlorococcus marinus (strain MIT 9303)).